Reading from the N-terminus, the 459-residue chain is Elongation factor 1-alpha (459 aa).

At G2 the chain carries N,N,N-trimethylglycine. K3 carries the N6,N6-dimethyllysine; alternate modification. N6-methyllysine; alternate is present on K3. A tr-type G domain is found at 5–240 (KLHVNVVVIG…DAIEPPTRPT (236 aa)). Residues 14–21 (GHVDSGKS) are G1. GTP is bound at residue 14 to 21 (GHVDSGKS). At K30 the chain carries N6-methyllysine. The segment at 70–74 (GITID) is G2. K79 is modified (N6,N6,N6-trimethyllysine). Residues 91-94 (DAPG) are G3. GTP-binding positions include 91-95 (DAPGH) and 153-156 (NKMD). The segment at 153-156 (NKMD) is G4. Positions 192–194 (SGW) are G5. K316 is modified (N6,N6-dimethyllysine; alternate). Residue K316 is modified to N6-methyllysine; alternate. K390 carries the post-translational modification N6-methyllysine.

The protein belongs to the TRAFAC class translation factor GTPase superfamily. Classic translation factor GTPase family. EF-Tu/EF-1A subfamily.

The protein localises to the cytoplasm. Functionally, this protein promotes the GTP-dependent binding of aminoacyl-tRNA to the A-site of ribosomes during protein biosynthesis. The protein is Elongation factor 1-alpha (TEF1) of Cryptococcus neoformans var. neoformans serotype D (strain B-3501A) (Filobasidiella neoformans).